We begin with the raw amino-acid sequence, 271 residues long: Protein FAM110D (271 aa).

The span at 1–13 (MLLSSPTTPSRGR) shows a compositional bias: polar residues. Disordered regions lie at residues 1–84 (MLLS…PDSL), 118–149 (DAAP…TGKR), and 186–242 (PQSW…GRPT).

Belongs to the FAM110 family.

The polypeptide is Protein FAM110D (Mus musculus (Mouse)).